Consider the following 278-residue polypeptide: tRNA (guanine-N(7)-)-methyltransferase (278 aa).

The tract at residues 1 to 42 is disordered; sequence MRHDGPMHVQPGVGLQSDTSSSTGTGSGPADEPEAEKSAWGY. Glu106, Glu131, Asn160, and Asp183 together coordinate S-adenosyl-L-methionine. Asp183 is an active-site residue. Residues Lys187, Asp219, and 256 to 259 each bind substrate; that span reads TKYE.

The protein belongs to the class I-like SAM-binding methyltransferase superfamily. TrmB family.

It carries out the reaction guanosine(46) in tRNA + S-adenosyl-L-methionine = N(7)-methylguanosine(46) in tRNA + S-adenosyl-L-homocysteine. Its pathway is tRNA modification; N(7)-methylguanine-tRNA biosynthesis. In terms of biological role, catalyzes the formation of N(7)-methylguanine at position 46 (m7G46) in tRNA. In Mycobacterium ulcerans (strain Agy99), this protein is tRNA (guanine-N(7)-)-methyltransferase.